Reading from the N-terminus, the 1521-residue chain is Probable DNA topoisomerase 2 (1521 aa).

Acidic residues predominate over residues 1 to 10 (MSDSENDYSD). The tract at residues 1 to 87 (MSDSENDYSD…DDKSSSSDNE (87 aa)) is disordered. Residues 36-48 (SKKKASATRKPAA) are compositionally biased toward basic residues. The segment covering 49–62 (KKATTTTTSTTKKS) has biased composition (low complexity). Residues Asn163, Asn192, 220–222 (SSH), and 233–240 (GRNGFGAK) contribute to the ATP site. Positions 412–414 (NKK) are interaction with DNA. 446–448 (QTK) lines the ATP pocket. The 114-residue stretch at 527-640 (CTLILTEGDS…TLLRMPGFLV (114 aa)) folds into the Toprim domain. Mg(2+) is bound by residues Glu533, Asp609, and Asp611. The Topo IIA-type catalytic domain maps to 771-1273 (IPNIVDGLKT…PIQEIYKRDL (503 aa)). Tyr861 acts as the O-(5'-phospho-DNA)-tyrosine intermediate in catalysis. A disordered region spans residues 1007–1047 (GTRKKKKEEKEKKAASRKGTKAKPTTTKRSKRVDDDDDNEK). The segment covering 1021-1037 (ASRKGTKAKPTTTKRSK) has biased composition (basic residues). Positions 1085 to 1094 (KLVSTINETN) are interaction with DNA. 2 disordered regions span residues 1192 to 1222 (KIKK…EQDD) and 1335 to 1521 (IPTT…SDSD). A compositionally biased stretch (acidic residues) spans 1201 to 1222 (DEEDAAISSDEEKDGAQEEQDD). Positions 1354–1368 (TTSTSTSTTTSSNTK) are enriched in low complexity. A compositionally biased stretch (acidic residues) spans 1422 to 1438 (LSDESDQESDQESDQGS). Residues 1454 to 1467 (PTTIATKKATTSKS) are compositionally biased toward low complexity. The span at 1468–1480 (KVIDDKSSDDEVI) shows a compositional bias: basic and acidic residues. Residues 1503 to 1521 (SDSDDDDLYDNEESSSDSD) show a composition bias toward acidic residues.

It belongs to the type II topoisomerase family. In terms of assembly, homodimer. Requires Mg(2+) as cofactor. Mn(2+) is required as a cofactor. Ca(2+) serves as cofactor.

It localises to the nucleus. The catalysed reaction is ATP-dependent breakage, passage and rejoining of double-stranded DNA.. Its function is as follows. Control of topological states of DNA by transient breakage and subsequent rejoining of DNA strands. Topoisomerase II makes double-strand breaks. The sequence is that of Probable DNA topoisomerase 2 (top2) from Dictyostelium discoideum (Social amoeba).